Consider the following 553-residue polypeptide: uncharacterized protein (553 aa).

5 helical membrane passes run 13 to 30 (ALQAVVVLSLISAIGLGL), 37 to 59 (GISLGVTFVFFAGILAGHFGLSI), 69 to 91 (SFGLIIFVYALGLQVGPGFFSSF), 98 to 120 (LNMLAIAVVILGTFLAVVCSYTT), and 157 to 179 (TPALGCAVAYPLGVIGVILAVLL). RCK C-terminal domains are found at residues 190–273 (LEVQ…LFGE) and 281–365 (KEDI…VLGN). The next 6 helical transmembrane spans lie at 375 to 397 (LVAVFVGIILGLALGAVPFSIPG), 402 to 424 (VRLGLAGGPIIVGILIGTFGPRL), 436 to 458 (LMLRALGLSLYLACLGLDAGAHF), 468 to 490 (LLWIGLGFGLTLVPTVLVGFFAF), 497 to 514 (FGSVSGMLCGSMANPMAL), and 529 to 551 (AYATVYPLSMFLRVIIAQVLLMF).

It belongs to the AAE transporter (TC 2.A.81) family.

It localises to the cell membrane. This is an uncharacterized protein from Bacteroides fragilis (strain YCH46).